Consider the following 87-residue polypeptide: Translation initiation factor IF-1 (87 aa).

The S1-like domain maps to Leu-16–Lys-87.

It belongs to the IF-1 family. Component of the 30S ribosomal translation pre-initiation complex which assembles on the 30S ribosome in the order IF-2 and IF-3, IF-1 and N-formylmethionyl-tRNA(fMet); mRNA recruitment can occur at any time during PIC assembly.

It localises to the cytoplasm. Functionally, one of the essential components for the initiation of protein synthesis. Stabilizes the binding of IF-2 and IF-3 on the 30S subunit to which N-formylmethionyl-tRNA(fMet) subsequently binds. Helps modulate mRNA selection, yielding the 30S pre-initiation complex (PIC). Upon addition of the 50S ribosomal subunit IF-1, IF-2 and IF-3 are released leaving the mature 70S translation initiation complex. In Magnetococcus marinus (strain ATCC BAA-1437 / JCM 17883 / MC-1), this protein is Translation initiation factor IF-1.